The primary structure comprises 1159 residues: CRISPR-associated endoribonuclease Cas13a (1159 aa).

The segment at 1–11 (MKVTKVGGISH) is binds crRNA repeat and spacer. Residues 1–170 (MKVTKVGGIS…NNIEKVEGKS (170 aa)) form an NTD region. Binds crRNA repeat stretches follow at residues 139 to 151 (NKIN…FEKN), 172 to 176 (RNIIY), 224 to 233 (REFYHEIIGR), 271 to 276 (QVFYKY), 294 to 297 (HFVE), and 301 to 305 (SQLLK). Residues 171–360 (KRNIIYDYYR…YNYYLQDGEI (190 aa)) are helical-1. The binds crRNA processing site stretch occupies residues 319–328 (KIKRIFEYQN). Binds crRNA repeat regions lie at residues 336–340 (KLLNK) and 371–378 (QNEAFLRN). The segment at 361-508 (ATSDFIARNR…SKKMFQNEIN (148 aa)) is HEPN-like fold 1-I. Active-site for target RNA cleavage residues include Arg472 and His477. Residues 509-751 (EKKLKLKIFR…EFLREIKLGN (243 aa)) are helical-2. The tract at residues 519–522 (QLNS) is binds target RNA. Positions 547–558 (NKNIPFVPSFTK) are binds crRNA spacer. A binds target RNA region spans residues 590–597 (DAQIYLLK). The segment at 718 to 722 (KQEFD) is binds crRNA spacer. Positions 752–813 (ILKYTERLNM…NLDNNRVTED (62 aa)) are HEPN-like fold 1-II. A binds crRNA repeat region spans residues 780 to 783 (SLEK). The binds crRNA spacer and target RNA stretch occupies residues 804–810 (NLDNNRV). The tract at residues 814 to 946 (FELEADEIGK…EYTHLKNKVE (133 aa)) is linker. 2 binds crRNA spacer regions span residues 845–857 (KIYF…IKHR) and 938–942 (YTHLK). Residues 880 to 946 (YKISIEELKK…EYTHLKNKVE (67 aa)) adopt a coiled-coil conformation. The tract at residues 947-1159 (FNELNLLQGL…YKMEEKKSEN (213 aa)) is HEPN-like fold 2. The tract at residues 962–963 (HR) is binds crRNA repeat. Positions 995–998 (FENK) are binds 3'-end of target RNA, in adjacent protein. Active-site for target RNA cleavage residues include Arg1048 and His1053. Binds crRNA processing site regions lie at residues 1072-1082 (RKLLSYDRKLK) and 1104-1108 (IGADK).

The protein belongs to the CRISPR-associated endoribonuclease Cas13a family. Crystals show the 3'-end of target RNA interacting with an adjacent protein molecule, and mutagenesis of those amino acid residues decreases target RNA cleavage, but it is not clear if this is physiological. A divalent metal cation is required as a cofactor.

With respect to regulation, target RNA acts as an activator for non-specific ssRNA cleavage; the target RNA and complementary crRNA must both be at least 20 nucleotides long to activate the HEPN-like catalytic pocket for RNase activity. Its function is as follows. CRISPR (clustered regularly interspaced short palindromic repeat), is an adaptive immune system that provides protection against mobile genetic elements (viruses, transposable elements and conjugative plasmids). CRISPR clusters contain sequences complementary to antecedent mobile elements (spacer sequences) and target invading nucleic acids. Unlike many single-component effectors, this CRISPR-Cas system targets RNA. CRISPR clusters are transcribed from pre-CRISPR RNA (crRNA) and processed into crRNA by this protein. pre-crRNA processing yields a 5'-OH and probably a 2',3'-cyclic phosphate. Also cleaves pre-crRNA from several other type VI-A CRISPR systems. Cleaves linear target ssRNA in a crRNA-dependent fashion, preferentially before U residues. Cleavage of target ssRNA is about 80-fold faster than pre-crRNA processing and uses a different active site. Binding a viable target RNA target activates this protein for non-specific RNA degradation in vitro (called collateral RNA degradation). Activation occurs with 10 fM target RNA. crRNA maturation is not essential for activation of RNA degradation, but lack of mature crRNA (due to mutagenesis) decreases activation levels. This system has a 3' protospacer flanking site in the target RNA (PFS), which is C and unavailable to base pair with crRNA (PFS is equivalent to PAM, the protospacer adjacent motif). The sequence is that of CRISPR-associated endoribonuclease Cas13a from Leptotrichia buccalis (strain ATCC 14201 / DSM 1135 / JCM 12969 / NCTC 10249 / C-1013-b).